A 220-amino-acid polypeptide reads, in one-letter code: GTP cyclohydrolase 1 (220 aa).

Zn(2+) is bound by residues Cys109, His112, and Cys180.

Belongs to the GTP cyclohydrolase I family. In terms of assembly, toroid-shaped homodecamer, composed of two pentamers of five dimers.

The catalysed reaction is GTP + H2O = 7,8-dihydroneopterin 3'-triphosphate + formate + H(+). The protein operates within cofactor biosynthesis; 7,8-dihydroneopterin triphosphate biosynthesis; 7,8-dihydroneopterin triphosphate from GTP: step 1/1. This Yersinia enterocolitica serotype O:8 / biotype 1B (strain NCTC 13174 / 8081) protein is GTP cyclohydrolase 1.